A 452-amino-acid polypeptide reads, in one-letter code: MAEIRQRRVLMVPAPFQGHLPSMMNLASYLSSQGFSITIVRNEFNFKDISHNFPGIKFFTIKDGLSESDVKSLGLLEFVLELNSVCEPLLKEFLTNHDDVVDFIIYDEFVYFPRRVAEDMNLPKMVFSPSSAATSISRCVLMENQSNGLLPPQDARSQLEETVPEFHPFRFKDLPFTAYGSMERLMILYENVSNRASSSGIIHNSSDCLENSFITTAQEKWGVPVYPVGPLHMTNSAMSCPSLFEEERNCLEWLEKQETSSVIYISMGSLAMTQDIEAVEMAMGFVQSNQPFLWVIRPGSINGQESLDFLPEQFNQTVTDGRGFVVKWAPQKEVLRHRAVGGFWNHGGWNSCLESISSGVPMICRPYSGDQRVNTRLMSHVWQTAYEIEGELERGAVEMAVRRLIVDQEGQEMRMRATILKEEVEASVTTEGSSHNSLNNLVHAIMMQIDEQ.

Residues Ser-269, 329–331 (APQ), 346–354 (HGGWNSCLE), and 368–371 (SGDQ) contribute to the UDP-alpha-D-glucose site.

The protein belongs to the UDP-glycosyltransferase family.

Functionally, possesses low quercetin 7-O-glucosyltransferase activity in vitro. The polypeptide is UDP-glycosyltransferase 76D1 (UGT76D1) (Arabidopsis thaliana (Mouse-ear cress)).